The following is a 788-amino-acid chain: Protein translocase subunit SecA 2 (788 aa).

ATP contacts are provided by residues Gln86, 104 to 108 (GEGKT), and Asp493.

The protein belongs to the SecA family. As to quaternary structure, monomer and homodimer. Part of the essential Sec protein translocation apparatus which comprises SecA, SecYEG and auxiliary proteins SecDF. Other proteins may also be involved.

Its subcellular location is the cell membrane. It localises to the cytoplasm. The enzyme catalyses ATP + H2O + cellular proteinSide 1 = ADP + phosphate + cellular proteinSide 2.. In terms of biological role, part of the Sec protein translocase complex. Interacts with the SecYEG preprotein conducting channel. Has a central role in coupling the hydrolysis of ATP to the transfer of proteins into and across the cell membrane, serving as an ATP-driven molecular motor driving the stepwise translocation of polypeptide chains across the membrane. In Bacillus thuringiensis (strain Al Hakam), this protein is Protein translocase subunit SecA 2.